A 125-amino-acid chain; its full sequence is MLWQGKSVRKATGGRYHASRGKKRFEIGRSPADTIIGTTRVKTIRVTGGNTKVRALRCEFANVSDKKTGKVQKVKINSVAENAANPNYVRRNLMTKGAIITTELGKAQIVSRPGQDGVINAVLIE.

It belongs to the eukaryotic ribosomal protein eS8 family. As to quaternary structure, part of the 30S ribosomal subunit.

The chain is Small ribosomal subunit protein eS8 from Methanocorpusculum labreanum (strain ATCC 43576 / DSM 4855 / Z).